The primary structure comprises 357 residues: Glutamate 5-kinase (357 aa).

An ATP-binding site is contributed by Lys-7. 3 residues coordinate substrate: Ser-43, Asp-130, and Asn-142. ATP-binding positions include 162 to 163 (TD) and 205 to 211 (TGGMTTK). Positions 270 to 341 (EGELCLDQGA…QALSVVTDAE (72 aa)) constitute a PUA domain.

The protein belongs to the glutamate 5-kinase family.

The protein localises to the cytoplasm. The catalysed reaction is L-glutamate + ATP = L-glutamyl 5-phosphate + ADP. The protein operates within amino-acid biosynthesis; L-proline biosynthesis; L-glutamate 5-semialdehyde from L-glutamate: step 1/2. Functionally, catalyzes the transfer of a phosphate group to glutamate to form L-glutamate 5-phosphate. In Synechococcus sp. (strain CC9902), this protein is Glutamate 5-kinase.